Reading from the N-terminus, the 148-residue chain is Large ribosomal subunit protein uL22 (148 aa).

The protein belongs to the universal ribosomal protein uL22 family. In terms of assembly, part of the 50S ribosomal subunit.

This protein binds specifically to 23S rRNA; its binding is stimulated by other ribosomal proteins, e.g. L4, L17, and L20. It is important during the early stages of 50S assembly. It makes multiple contacts with different domains of the 23S rRNA in the assembled 50S subunit and ribosome. Its function is as follows. The globular domain of the protein is located near the polypeptide exit tunnel on the outside of the subunit, while an extended beta-hairpin is found that lines the wall of the exit tunnel in the center of the 70S ribosome. This is Large ribosomal subunit protein uL22 from Thermosipho africanus (strain TCF52B).